The sequence spans 438 residues: Malic acid transport protein (438 aa).

10 consecutive transmembrane segments (helical) span residues 37-57, 65-85, 106-126, 140-160, 172-192, 205-225, 242-262, 288-308, 321-341, and 353-373; these read SWFA…SFPF, IGKI…SCML, LFIA…AIYA, ILYY…FFTI, SPAW…AGAV, VIFG…LFAV, PGMF…INIA, FMAI…MVSF, ACGW…TIEI, and FGHI…YLMV. The segment at 390-438 is disordered; the sequence is AHPPPKPNTGVLNPTFPPEKAPASLEKVDTHVTSTGGESDPPSSEHESV. Phosphoserine is present on residues serine 413, serine 423, serine 428, serine 432, serine 433, and serine 437.

It belongs to the tellurite-resistance/dicarboxylate transporter (TDT) family.

Its subcellular location is the membrane. Its function is as follows. Permease for malate and other C4 dicarboxylic acids. The chain is Malic acid transport protein (mae1) from Schizosaccharomyces pombe (strain 972 / ATCC 24843) (Fission yeast).